Here is a 126-residue protein sequence, read N- to C-terminus: Histone H2B type 1-K (126 aa).

The span at 1 to 12 shows a compositional bias: low complexity; sequence MPEPAKSAPAPK. A disordered region spans residues 1–36; that stretch reads MPEPAKSAPAPKKGSKKAVTKAQKIDGKKRKRSRKE. Proline 2 carries the post-translational modification N-acetylproline. The residue at position 3 (glutamate 3) is an ADP-ribosyl glutamic acid. Lysine 6 is subject to N6-(2-hydroxyisobutyryl)lysine; alternate. Position 6 is an N6-(beta-hydroxybutyryl)lysine; alternate (lysine 6). Lysine 6 is subject to N6-acetyllysine; alternate. Lysine 6 carries the post-translational modification N6-butyryllysine; alternate. Lysine 6 is subject to N6-crotonyllysine; alternate. Lysine 6 carries the post-translational modification N6-lactoyllysine; alternate. A Glycyl lysine isopeptide (Lys-Gly) (interchain with G-Cter in SUMO2); alternate cross-link involves residue lysine 6. At serine 7 the chain carries ADP-ribosylserine. Lysine 12 is subject to N6-(beta-hydroxybutyryl)lysine; alternate. Lysine 12 and lysine 13 each carry N6-acetyllysine; alternate. 2 positions are modified to N6-crotonyllysine; alternate: lysine 12 and lysine 13. At lysine 12 the chain carries N6-lactoyllysine; alternate. An N6-(2-hydroxyisobutyryl)lysine; alternate modification is found at lysine 13. Position 15 is a phosphoserine; by STK4/MST1 (serine 15). Lysine 16, lysine 17, lysine 21, and lysine 24 each carry N6-acetyllysine; alternate. Lysine 16, lysine 17, lysine 21, lysine 24, and lysine 35 each carry N6-crotonyllysine; alternate. Residues lysine 16, lysine 17, lysine 21, and lysine 24 each carry the N6-lactoyllysine; alternate modification. Lysine 17 carries the post-translational modification N6-glutaryllysine; alternate. N6-(2-hydroxyisobutyryl)lysine; alternate is present on residues lysine 21, lysine 24, and lysine 35. The residue at position 21 (lysine 21) is an N6-(beta-hydroxybutyryl)lysine; alternate. Lysine 21 carries the N6-butyryllysine; alternate modification. Lysine 21 participates in a covalent cross-link: Glycyl lysine isopeptide (Lys-Gly) (interchain with G-Cter in SUMO2); alternate. Lysine 35 is modified (N6-(beta-hydroxybutyryl)lysine; alternate). Lysine 35 carries the post-translational modification N6-glutaryllysine; alternate. Lysine 35 is subject to N6-succinyllysine; alternate. Lysine 35 is covalently cross-linked (Glycyl lysine isopeptide (Lys-Gly) (interchain with G-Cter in ubiquitin); alternate). Glutamate 36 is modified (polyADP-ribosyl glutamic acid). Serine 37 is subject to Phosphoserine; by AMPK. 3 positions are modified to N6-(2-hydroxyisobutyryl)lysine; alternate: lysine 44, lysine 47, and lysine 58. Lysine 44 is subject to N6-lactoyllysine; alternate. An N6-glutaryllysine; alternate mark is found at lysine 44 and lysine 47. The residue at position 47 (lysine 47) is an N6-methyllysine; alternate. Residue lysine 58 is modified to N6,N6-dimethyllysine; alternate. Position 80 is a dimethylated arginine (arginine 80). Position 86 is an N6-(2-hydroxyisobutyryl)lysine; alternate (lysine 86). At lysine 86 the chain carries N6-acetyllysine; alternate. Position 86 is an N6-lactoyllysine; alternate (lysine 86). The residue at position 86 (lysine 86) is an N6,N6,N6-trimethyllysine; alternate. Arginine 87 and arginine 93 each carry omega-N-methylarginine. The residue at position 109 (lysine 109) is an N6-(2-hydroxyisobutyryl)lysine; alternate. Lysine 109 bears the N6-lactoyllysine; alternate mark. N6-glutaryllysine; alternate is present on lysine 109. The residue at position 109 (lysine 109) is an N6-methyllysine; alternate. A glycan (O-linked (GlcNAc) serine) is linked at serine 113. The residue at position 116 (threonine 116) is a Phosphothreonine. N6-(2-hydroxyisobutyryl)lysine; alternate occurs at positions 117 and 121. Residue lysine 117 is modified to N6-(beta-hydroxybutyryl)lysine; alternate. An N6-lactoyllysine; alternate mark is found at lysine 117 and lysine 121. Residues lysine 117 and lysine 121 each carry the N6-glutaryllysine; alternate modification. 2 positions are modified to N6-succinyllysine; alternate: lysine 117 and lysine 121. An N6-methylated lysine; alternate modification is found at lysine 117. Residue lysine 121 forms a Glycyl lysine isopeptide (Lys-Gly) (interchain with G-Cter in ubiquitin); alternate linkage.

The protein belongs to the histone H2B family. In terms of assembly, the nucleosome is a histone octamer containing two molecules each of H2A, H2B, H3 and H4 assembled in one H3-H4 heterotetramer and two H2A-H2B heterodimers. The octamer wraps approximately 147 bp of DNA. Post-translationally, monoubiquitination at Lys-35 (H2BK34Ub) by the MSL1/MSL2 dimer is required for histone H3 'Lys-4' (H3K4me) and 'Lys-79' (H3K79me) methylation and transcription activation at specific gene loci, such as HOXA9 and MEIS1 loci. Similarly, monoubiquitination at Lys-121 (H2BK120Ub) by the RNF20/40 complex gives a specific tag for epigenetic transcriptional activation and is also prerequisite for histone H3 'Lys-4' and 'Lys-79' methylation. It also functions cooperatively with the FACT dimer to stimulate elongation by RNA polymerase II. H2BK120Ub also acts as a regulator of mRNA splicing: deubiquitination by USP49 is required for efficient cotranscriptional splicing of a large set of exons. In terms of processing, phosphorylated on Ser-15 (H2BS14ph) by STK4/MST1 during apoptosis; which facilitates apoptotic chromatin condensation. Also phosphorylated on Ser-15 in response to DNA double strand breaks (DSBs), and in correlation with somatic hypermutation and immunoglobulin class-switch recombination. Phosphorylation at Ser-37 (H2BS36ph) by AMPK in response to stress promotes transcription. GlcNAcylation at Ser-113 promotes monoubiquitination of Lys-121. It fluctuates in response to extracellular glucose, and associates with transcribed genes. Post-translationally, ADP-ribosylated by PARP1 or PARP2 on Ser-7 (H2BS6ADPr) in response to DNA damage. H2BS6ADPr promotes recruitment of CHD1L. Mono-ADP-ribosylated on Glu-3 (H2BE2ADPr) by PARP3 in response to single-strand breaks. Poly ADP-ribosylation on Glu-36 (H2BE35ADPr) by PARP1 regulates adipogenesis: it inhibits phosphorylation at Ser-37 (H2BS36ph), thereby blocking expression of pro-adipogenetic genes. In terms of processing, crotonylation (Kcr) is specifically present in male germ cells and marks testis-specific genes in post-meiotic cells, including X-linked genes that escape sex chromosome inactivation in haploid cells. Crotonylation marks active promoters and enhancers and confers resistance to transcriptional repressors. It is also associated with post-meiotically activated genes on autosomes. Lactylated in macrophages by EP300/P300 by using lactoyl-CoA directly derived from endogenous or exogenous lactate, leading to stimulates gene transcription.

Its subcellular location is the nucleus. The protein resides in the chromosome. Its function is as follows. Core component of nucleosome. Nucleosomes wrap and compact DNA into chromatin, limiting DNA accessibility to the cellular machineries which require DNA as a template. Histones thereby play a central role in transcription regulation, DNA repair, DNA replication and chromosomal stability. DNA accessibility is regulated via a complex set of post-translational modifications of histones, also called histone code, and nucleosome remodeling. The protein is Histone H2B type 1-K of Bos taurus (Bovine).